A 295-amino-acid chain; its full sequence is Aquaporin-9 (295 aa).

Over 1 to 24 the chain is Cytoplasmic; it reads MPSEKDGAKKSLMQRLALKSRIAK. Residues 25–43 form a helical membrane-spanning segment; the sequence is ETLSEFLGTFIMIVLGCSS. Over 44–57 the chain is Extracellular; sequence IAQAVLSRERFGGI. A helical membrane pass occupies residues 58–77; it reads ITINIGFASAVVMALYVTFG. Over 78 to 79 the chain is Cytoplasmic; that stretch reads IS. An intramembrane region (discontinuously helical) is located at residues 80–92; that stretch reads GGHINPAVSFAMC. The short motif at 84 to 86 is the NPA 1 element; that stretch reads NPA. Topologically, residues 93-98 are cytoplasmic; the sequence is AFGRME. A helical transmembrane segment spans residues 99-123; it reads WFKFPFYVGAQFLGAFVGAATVFGI. The Extracellular segment spans residues 124–160; sequence YYDGLMAFAGGKLLVVGENATAFIFATYPAPFISTPG. Residues 161–178 traverse the membrane as a helical segment; it reads AFVDQVVSTMFLLLIVFA. Residues 179–190 lie on the Cytoplasmic side of the membrane; sequence MFDSRNLGVPRG. Residues 191–207 traverse the membrane as a helical segment; it reads LEPVVIGLLIIVLSCSL. The Extracellular portion of the chain corresponds to 208-210; it reads GLN. Residues 211–225 constitute an intramembrane region (discontinuously helical); sequence SGCAMNPARDLSPRL. Positions 216-218 match the NPA 2 motif; that stretch reads NPA. Residues 226-243 are Extracellular-facing; that stretch reads FTALAGWGFEVFTVGNNF. The helical transmembrane segment at 244-264 threads the bilayer; it reads WWIPVVGPMIGAFLGGLIYIL. Over 265–295 the chain is Cytoplasmic; the sequence is FIQMHHSKLDPDMKAEPSENNLEKHELSVIM.

The protein belongs to the MIP/aquaporin (TC 1.A.8) family. As to quaternary structure, homotetramer; each monomer provides an independent glycerol/water pore. In terms of tissue distribution, detected in testis and liver. Detected in immature spermatocytes and in interstitial Leydig cells.

Its subcellular location is the cell membrane. The protein localises to the basolateral cell membrane. The enzyme catalyses H2O(in) = H2O(out). It carries out the reaction glycerol(in) = glycerol(out). The catalysed reaction is urea(in) = urea(out). It catalyses the reaction (S)-lactate(in) = (S)-lactate(out). The enzyme catalyses NH4(+)(in) = NH4(+)(out). It carries out the reaction uracil(in) = uracil(out). The catalysed reaction is adenine(out) = adenine(in). It catalyses the reaction 3-hydroxybutanoate(in) = 3-hydroxybutanoate(out). The enzyme catalyses D-sorbitol(in) = D-sorbitol(out). It carries out the reaction D-mannitol(in) = D-mannitol(out). The catalysed reaction is H2O2(out) = H2O2(in). It catalyses the reaction arsenite(in) = arsenite(out). The enzyme catalyses selenite(in) = selenite(out). Its activity is regulated as follows. Channel activity is inhibited by mercury ions and phloretin. Its function is as follows. Aquaglyceroporins form homotetrameric transmembrane channels, with each monomer independently mediating glycerol and water transport across the plasma membrane along their osmotic gradient. AQP9 is the primary route for glycerol uptake in hepatocytes, supporting hepatic gluconeogenesis. It exhibits broad specificity and may transport various small, non-charged solutes, including carbamides, polyols, purines, and pyrimidines. AQP9 may also facilitate hepatic urea extrusion. Due to its permeability to lactate, AQP9 might participate in the astrocyte-to-neuron lactate shuttle, supplying neurons with energy. Additionally, AQP9 is permeable to arsenite, contributing to arsenic excretion by the liver and providing partial protection against arsenic toxicity. It is also permeable to H2O2 in vivo. Could also be permeable to ammonium. This chain is Aquaporin-9, found in Rattus norvegicus (Rat).